The primary structure comprises 185 residues: Kappa-casein (185 aa).

Residues 1-20 form the signal peptide; the sequence is MKSFFLVVNILALTLPFLGA. Thr143 carries an O-linked (GalNAc...) threonine glycan. Ser161 carries the phosphoserine; alternate modification. Ser161 is a glycosylation site (O-linked (GalNAc...) serine; alternate). O-linked (GalNAc...) threonine glycosylation is present at Thr178. Phosphoserine is present on Ser179.

The protein belongs to the kappa-casein family. Mammary gland specific. Secreted in milk.

Its subcellular location is the secreted. Kappa-casein stabilizes micelle formation, preventing casein precipitation in milk. In Equus caballus (Horse), this protein is Kappa-casein (CSN3).